Here is a 274-residue protein sequence, read N- to C-terminus: Remorin 4.2 (274 aa).

Over residues 1–30 (MLTLYHQERSPDATSNDRDETPETVVREVH) the composition is skewed to basic and acidic residues. Disordered stretches follow at residues 1–71 (MLTL…EGEN), 117–157 (TDHE…TVQR), and 218–245 (AMEK…AKRG). Composition is skewed to polar residues over residues 61–71 (RSATTMSEGEN) and 145–156 (GPGQSRVGSTVQ). The stretch at 204–239 (MKKIERKLEERKAKAMEKTQNNVAKAQRKAEERRAT) forms a coiled coil. The span at 231–245 (RKAEERRATAEAKRG) shows a compositional bias: basic and acidic residues.

The protein belongs to the remorin family. As to quaternary structure, forms homodimer and heterodimer with REM4.1. Interacts with KIN11. Post-translationally, probably ubiquitinated and degraded by the 26S proteasome pathway. Predominantly detected in bud, stem, root, flower, silique, and leaves, and enhanced dramatically in senescence leaf.

The protein resides in the cell membrane. Its function is as follows. Collaborates with REM4.1 to positively regulate the BCTV and BSCTV susceptibility. In Arabidopsis thaliana (Mouse-ear cress), this protein is Remorin 4.2.